Reading from the N-terminus, the 161-residue chain is MFASRLAALGLLLLALVLDGKPAPPPQPLRKAPAGGTTALQRQLTEQQQQQQQAEGSSGPAAGGGGGRSGSKTANAAPTAPKSKGAAASAASRLLRDLRPDGKQSRAAWGRMVHPEHHAGGGGGGGGGGSRRLKGLPKKGLGSGCFGLKLDRIGSMSGLGC.

The signal sequence occupies residues 1-22; sequence MFASRLAALGLLLLALVLDGKP. Positions 19-135 are disordered; sequence DGKPAPPPQP…GGGGSRRLKG (117 aa). Residues 23-139 constitute a propeptide that is removed on maturation; that stretch reads APPPQPLRKA…SRRLKGLPKK (117 aa). Composition is skewed to low complexity over residues 29-60 and 76-93; these read LRKAPAGGTTALQRQLTEQQQQQQQAEGSSGP and AAPTAPKSKGAAASAASR. Residues 94-104 show a composition bias toward basic and acidic residues; sequence LLRDLRPDGKQ. Gly residues predominate over residues 120 to 130; the sequence is GGGGGGGGGGS. A disulfide bond links cysteine 145 and cysteine 161.

This sequence belongs to the natriuretic peptide family. As to expression, expressed by the venom gland.

The protein localises to the secreted. Snake venom natriuretic peptide that has a vasorelaxant activity in rat aortic strips and a diuretic potency in anesthetized rats. May act by activating natriuretic receptors (NPR1 and/or NPR2). The sequence is that of C-type natriuretic peptide from Rhabdophis tigrinus tigrinus (Tiger keelback snake).